The sequence spans 555 residues: Formate--tetrahydrofolate ligase (555 aa).

65-72 is an ATP binding site; it reads TPAGEGKS.

It belongs to the formate--tetrahydrofolate ligase family.

The catalysed reaction is (6S)-5,6,7,8-tetrahydrofolate + formate + ATP = (6R)-10-formyltetrahydrofolate + ADP + phosphate. It functions in the pathway one-carbon metabolism; tetrahydrofolate interconversion. This Staphylococcus aureus (strain MRSA252) protein is Formate--tetrahydrofolate ligase.